We begin with the raw amino-acid sequence, 241 residues long: 3-dehydroquinate dehydratase (241 aa).

3-dehydroquinate contacts are provided by residues 35-37 (ELR) and R70. H133 acts as the Proton donor/acceptor in catalysis. K160 serves as the catalytic Schiff-base intermediate with substrate. 3-dehydroquinate is bound by residues R202 and Q225.

The protein belongs to the type-I 3-dehydroquinase family. In terms of assembly, homodimer.

It catalyses the reaction 3-dehydroquinate = 3-dehydroshikimate + H2O. It functions in the pathway metabolic intermediate biosynthesis; chorismate biosynthesis; chorismate from D-erythrose 4-phosphate and phosphoenolpyruvate: step 3/7. In terms of biological role, involved in the third step of the chorismate pathway, which leads to the biosynthesis of aromatic amino acids. Catalyzes the cis-dehydration of 3-dehydroquinate (DHQ) and introduces the first double bond of the aromatic ring to yield 3-dehydroshikimate. This is 3-dehydroquinate dehydratase from Staphylococcus haemolyticus (strain JCSC1435).